Reading from the N-terminus, the 181-residue chain is uncharacterized protein (181 aa).

Positions 1-159 (MTVHHFTFHI…KACWMMQSLT (159 aa)) constitute an N-acetyltransferase domain.

It belongs to the acetyltransferase family.

This is an uncharacterized protein from Escherichia coli (strain K12).